The chain runs to 120 residues: Ribosome-binding factor A (120 aa).

Belongs to the RbfA family. As to quaternary structure, monomer. Binds 30S ribosomal subunits, but not 50S ribosomal subunits or 70S ribosomes.

It localises to the cytoplasm. Functionally, one of several proteins that assist in the late maturation steps of the functional core of the 30S ribosomal subunit. Associates with free 30S ribosomal subunits (but not with 30S subunits that are part of 70S ribosomes or polysomes). Required for efficient processing of 16S rRNA. May interact with the 5'-terminal helix region of 16S rRNA. In Campylobacter jejuni subsp. jejuni serotype O:6 (strain 81116 / NCTC 11828), this protein is Ribosome-binding factor A.